The following is a 265-amino-acid chain: Small ribosomal subunit protein uS2 (265 aa).

A disordered region spans residues 226 to 265 (AAAPNSASVREEEFSAESADEGKGRRAPAKKGDKKADAAE). Residues 245 to 265 (DEGKGRRAPAKKGDKKADAAE) show a composition bias toward basic and acidic residues.

Belongs to the universal ribosomal protein uS2 family.

In Xanthomonas euvesicatoria pv. vesicatoria (strain 85-10) (Xanthomonas campestris pv. vesicatoria), this protein is Small ribosomal subunit protein uS2.